The primary structure comprises 189 residues: MDEFVNLKETELRLGLPGTDNVCEAKERVSCCNNNNKRVLSTDTEKEIESSSRKTETSPPRKAQIVGWPPVRSYRKNNIQSKKNESEHEGQGIYVKVSMDGAPYLRKIDLSCYKGYSELLKALEVMFKFSVGEYFERDGYKGSDFVPTYEDKDGDWMLIGDVPWEMFICTCKRLRIMKGSEAKGLGCGV.

The short motif at 12–16 is the EAR-like (transcriptional repression) element; sequence LRLGL. A disordered region spans residues 42–65; it reads TDTEKEIESSSRKTETSPPRKAQI. Residues 43–56 show a composition bias toward basic and acidic residues; that stretch reads DTEKEIESSSRKTE. The 88-residue stretch at 92-179 folds into the PB1 domain; that stretch reads GIYVKVSMDG…TCKRLRIMKG (88 aa).

Belongs to the Aux/IAA family. In terms of assembly, homodimers and heterodimers. Interacts with TPL. Interacts with TIR1, the F-box component of the Skp1-Cdc53/cullin-F-box (SCFTIR1) E3 ubiquitin ligase complex. Phosphorylated by phytochrome A in vitro. As to expression, highly expressed in stems and flowers. Expressed in hypocotyls, cotyledons and leaves, but barely detected in roots. Expressed in root tips. In the root meristem, specifically detected at the vascular tissue transition zone.

The protein resides in the nucleus. Functionally, aux/IAA proteins are short-lived transcriptional factors that function as repressors of early auxin response genes at low auxin concentrations. Repression is thought to result from the interaction with auxin response factors (ARFs), proteins that bind to the auxin-responsive promoter element (AuxRE). Plays a central role in auxin regulation of root growth, in gravitropism, and in lateral root formation. Regulated by an auxin-induced protein turnover. Formation of heterodimers with ARF proteins may alter their ability to modulate early auxin response genes expression. When activated by cytokinin, restricts the expression of the PIN genes to the vascular transition zone. Induction of SHY2 in the vascular transition zone restricts BRX expression to down-regulate PIN3 and thus limit meristem growth, but proper SHY2 expression requires BRX. Involved in meristem growth and in determining its size. May participate in strigolactone signaling to regulate meristem size and lateral root formation. The protein is Auxin-responsive protein IAA3 (IAA3) of Arabidopsis thaliana (Mouse-ear cress).